The primary structure comprises 544 residues: Chaperonin GroEL 1 (544 aa).

Residues 29–32 (TLGP), 86–90 (DGTTT), Gly413, and Asp495 each bind ATP.

The protein belongs to the chaperonin (HSP60) family. Forms a cylinder of 14 subunits composed of two heptameric rings stacked back-to-back. Interacts with the co-chaperonin GroES.

The protein resides in the cytoplasm. It carries out the reaction ATP + H2O + a folded polypeptide = ADP + phosphate + an unfolded polypeptide.. Its function is as follows. Together with its co-chaperonin GroES, plays an essential role in assisting protein folding. The GroEL-GroES system forms a nano-cage that allows encapsulation of the non-native substrate proteins and provides a physical environment optimized to promote and accelerate protein folding. The protein is Chaperonin GroEL 1 of Synechococcus sp. (strain ATCC 27144 / PCC 6301 / SAUG 1402/1) (Anacystis nidulans).